A 1148-amino-acid polypeptide reads, in one-letter code: Envelopment polyprotein (1148 aa).

Residues 1 to 23 (MGKSSPVCLYLILQGLLLFDTVN) form the signal peptide. The Lumenal segment spans residues 24 to 496 (AKNLNELKME…PGLHGWATVL (473 aa)). Intrachain disulfides connect C34–C159, C68–C165, C117–C136, C141–C146, C183–C193, and C218–C257. A glycan (N-linked (GlcNAc...) asparagine; by host) is linked at N142. N357 carries N-linked (GlcNAc...) asparagine; by host glycosylation. 4 cysteine pairs are disulfide-bonded: C386–C445, C390–C399, C415–C434, and C462–C485. N409 is a glycosylation site (N-linked (GlcNAc...) asparagine; by host). Residues 497 to 517 (LLLTFCFGWVLIPTITMILLK) form a helical membrane-spanning segment. Residues 518–637 (ILIAFAYLCS…LSLFRYRSRF (120 aa)) lie on the Cytoplasmic side of the membrane. The binding to the ribonucleoprotein stretch occupies residues 526-543 (CSKYNTDSKFRILVEKVK). 2 consecutive CCHC-type zinc fingers follow at residues 555-575 (CEVCQYECETAKELESHRKSC) and 580-601 (CPYCLNPSEATPSALQAHFKVC). Binding to the ribonucleoprotein regions lie at residues 598–615 (FKVCKLTSRFQENLKKSL) and 621–635 (MQGCYRTLSLFRYRS). One can recognise an ITAM domain in the interval 621 to 644 (MQGCYRTLSLFRYRSRFFVGLVWC). The YxxL motif lies at 625-628 (YRTL). A helical membrane pass occupies residues 638-658 (FVGLVWCMLLVLELIVWAASA). Topologically, residues 659 to 1115 (ETQNLNDGWT…WVLGVLNGNW (457 aa)) are lumenal. 8 disulfide bridges follow: C745–C780, C749–C787, C761–C894, C775–C905, C790–C913, C816–C825, C833–C842, and C873–C877. The fusion loop stretch occupies residues 767–787 (YEYETGWGCNPPDCPGVGTGC). N-linked (GlcNAc...) asparagine; by host glycosylation occurs at N937. Disulfide bonds link C979-C1009, C1002-C1054, C1019-C1024, C1055-C1060, and C1094-C1098. A helical membrane pass occupies residues 1116-1136 (MVVAVLIALLILSIFLFALCC). Positions 1131–1148 (LFALCCPRRPSYKKDHKP) are binding to the ribonucleoprotein. Residues 1137-1148 (PRRPSYKKDHKP) are Cytoplasmic-facing.

The protein belongs to the hantavirus envelope glycoprotein family. As to quaternary structure, homodimer. Homotetramer; forms heterotetrameric Gn-Gc spikes in the pre-fusion conformation. Interacts (via C-terminus) with the nucleoprotein. Interacts with host TUFM; this interaction contributes to the virus-induced degradation of mitochondria by autophagy, which leads to degradation of host MAVS and inhibition of type I interferon (IFN) responses. Interacts with host MAP1LC3B; this interaction contributes to the virus-induced degradation of mitochondria by autophagy, which leads to degradation of host MAVS and inhibition of type I interferon (IFN) responses. Homodimer. Homotetramer; forms heterotetrameric Gn-Gc spikes in the pre-fusion conformation. Homotrimer; forms homotrimer in the post-fusion conformation at acidic pH. Interacts (via C-terminus) with the nucleoprotein. Post-translationally, envelope polyprotein precursor is quickly cleaved in vivo just after synthesis, presumably by host signal peptidase.

It localises to the virion membrane. Its subcellular location is the host cell surface. The protein resides in the host Golgi apparatus membrane. The protein localises to the host endoplasmic reticulum membrane. It is found in the host mitochondrion. Forms homotetramers with glycoprotein C at the surface of the virion. Attaches the virion to host cell receptors including integrin ITGAV/ITGB3. This attachment induces virion internalization predominantly through clathrin-dependent endocytosis. Mediates the assembly and budding of infectious virus particles through its interaction with the nucleocapsid protein and the viral genome. May dysregulate normal immune and endothelial cell responses through an ITAM motif. Translocates to mitochondria, binds to host TUFM and recruits MAP1LC3B. These interactions induce mitochondrial autophagy and therefore destruction of host MAVS leading to inhibition of type I interferon (IFN) responses. Concomitant breakdown of glycoprotein N is apparently prevented by the nucleoprotein that may inhibit Gn-stimulated autophagosome-lysosome fusion. Interacts with the viral genomic RNA. In terms of biological role, forms heterooctamers with glycoprotein N at the surface of the virion. Attaches the virion to host cell receptors including integrin ITGAV/ITGB3. This attachment induces virion internalization predominantly through clathrin-dependent endocytosis. Class II fusion protein that promotes fusion of viral membrane with host endosomal membrane after endocytosis of the virion. In Homo sapiens (Human), this protein is Envelopment polyprotein (GP).